The sequence spans 238 residues: Ribonuclease PH (238 aa).

Residues Arg86 and 124 to 126 (GTR) each bind phosphate.

It belongs to the RNase PH family. In terms of assembly, homohexameric ring arranged as a trimer of dimers.

The enzyme catalyses tRNA(n+1) + phosphate = tRNA(n) + a ribonucleoside 5'-diphosphate. Phosphorolytic 3'-5' exoribonuclease that plays an important role in tRNA 3'-end maturation. Removes nucleotide residues following the 3'-CCA terminus of tRNAs; can also add nucleotides to the ends of RNA molecules by using nucleoside diphosphates as substrates, but this may not be physiologically important. Probably plays a role in initiation of 16S rRNA degradation (leading to ribosome degradation) during starvation. This chain is Ribonuclease PH, found in Klebsiella pneumoniae (strain 342).